We begin with the raw amino-acid sequence, 115 residues long: MNMFMALSVNIILSTCLILIAFWLPQLNLYNEKANPYECGFDQSSTARLPFSMKFFLVAITFLLFDLEIALLLPLPWAIQMYSINTMMLTAFILVSILALGLAYEWVQKGLEWTE.

A run of 3 helical transmembrane segments spans residues F4–L24, F55–L75, and M87–V107.

Belongs to the complex I subunit 3 family. In terms of assembly, core subunit of respiratory chain NADH dehydrogenase (Complex I) which is composed of 45 different subunits. Interacts with TMEM186. Interacts with TMEM242.

Its subcellular location is the mitochondrion inner membrane. The catalysed reaction is a ubiquinone + NADH + 5 H(+)(in) = a ubiquinol + NAD(+) + 4 H(+)(out). In terms of biological role, core subunit of the mitochondrial membrane respiratory chain NADH dehydrogenase (Complex I) which catalyzes electron transfer from NADH through the respiratory chain, using ubiquinone as an electron acceptor. Essential for the catalytic activity of complex I. This Osgoodomys banderanus (Michoacan deer mouse) protein is NADH-ubiquinone oxidoreductase chain 3.